A 147-amino-acid chain; its full sequence is Signal peptidase complex subunit 3 (147 aa).

Over 1-6 the chain is Cytoplasmic; that stretch reads MHSWVQ. A helical; Signal-anchor for type II membrane protein membrane pass occupies residues 7–29; that stretch reads RLLTTATTAALLLLAACCAASAL. Residues 30 to 147 are Lumenal-facing; it reads DAFHVPSVQA…EFNLPDSYTS (118 aa).

This sequence belongs to the SPCS3 family. In terms of assembly, component of the signal peptidase complex (SPC) composed of a catalytic subunit SEC11 and three accessory subunits SPCS1, SPCS2 and SPCS3. The complex induces a local thinning of the ER membrane which is used to measure the length of the signal peptide (SP) h-region of protein substrates. This ensures the selectivity of the complex towards h-regions shorter than 18-20 amino acids.

The protein localises to the endoplasmic reticulum membrane. In terms of biological role, essential component of the signal peptidase complex (SPC) which catalyzes the cleavage of N-terminal signal sequences from nascent proteins as they are translocated into the lumen of the endoplasmic reticulum. Essential for the SPC catalytic activity, possibly by stabilizing and positioning the active center of the complex close to the lumenal surface. The chain is Signal peptidase complex subunit 3 from Oryza sativa subsp. japonica (Rice).